Here is a 133-residue protein sequence, read N- to C-terminus: Large-conductance mechanosensitive channel (133 aa).

The next 2 membrane-spanning stretches (helical) occupy residues 10–30 (FAVK…GAFG) and 76–96 (GAFI…FSMV).

Belongs to the MscL family. Homopentamer.

It localises to the cell inner membrane. In terms of biological role, channel that opens in response to stretch forces in the membrane lipid bilayer. May participate in the regulation of osmotic pressure changes within the cell. This chain is Large-conductance mechanosensitive channel, found in Haemophilus ducreyi (strain 35000HP / ATCC 700724).